The following is a 1206-amino-acid chain: DNA polymerase (1206 aa).

Belongs to the DNA polymerase type-B family.

The catalysed reaction is DNA(n) + a 2'-deoxyribonucleoside 5'-triphosphate = DNA(n+1) + diphosphate. This Pyramimonas orientalis virus (PoV01) protein is DNA polymerase (dpo).